The sequence spans 217 residues: MIIAIDAGHGGQDPGAIGKNKFQEKNITLSIAKKLTKLLNHTNFFKAVMIRRGNYFLSVFKRTQIAEKYHANLLISIHANSSKNRKISGVSIWVLPKNVHNTRIQKHKLNKKTKNIHKKINTKTSKFKNFYEIEYDLAKIIIQELRKVSTLNQKKPKYAKFGILKFSQFPSILVETGFISNPIEEQHLNKKFYQNLISKSISIALKKYFLKRIKQYN.

Positions 3 to 206 constitute a MurNAc-LAA domain; that stretch reads IAIDAGHGGQ…ISKSISIALK (204 aa).

Belongs to the N-acetylmuramoyl-L-alanine amidase 3 family.

The protein resides in the secreted. It carries out the reaction Hydrolyzes the link between N-acetylmuramoyl residues and L-amino acid residues in certain cell-wall glycopeptides.. Functionally, cell-wall hydrolase involved in septum cleavage during cell division. The sequence is that of Putative N-acetylmuramoyl-L-alanine amidase (amiB) from Buchnera aphidicola subsp. Baizongia pistaciae (strain Bp).